A 205-amino-acid polypeptide reads, in one-letter code: ATP-dependent Clp protease proteolytic subunit (205 aa).

Residue serine 98 is the Nucleophile of the active site. Residue histidine 123 is part of the active site.

This sequence belongs to the peptidase S14 family. In terms of assembly, fourteen ClpP subunits assemble into 2 heptameric rings which stack back to back to give a disk-like structure with a central cavity, resembling the structure of eukaryotic proteasomes.

Its subcellular location is the cytoplasm. It carries out the reaction Hydrolysis of proteins to small peptides in the presence of ATP and magnesium. alpha-casein is the usual test substrate. In the absence of ATP, only oligopeptides shorter than five residues are hydrolyzed (such as succinyl-Leu-Tyr-|-NHMec, and Leu-Tyr-Leu-|-Tyr-Trp, in which cleavage of the -Tyr-|-Leu- and -Tyr-|-Trp bonds also occurs).. Cleaves peptides in various proteins in a process that requires ATP hydrolysis. Has a chymotrypsin-like activity. Plays a major role in the degradation of misfolded proteins. In Desulfosudis oleivorans (strain DSM 6200 / JCM 39069 / Hxd3) (Desulfococcus oleovorans), this protein is ATP-dependent Clp protease proteolytic subunit.